The following is a 181-amino-acid chain: ATP-dependent protease subunit HslV (181 aa).

Thr9 is a catalytic residue. Na(+) is bound by residues Ser166, Cys169, and Thr172.

This sequence belongs to the peptidase T1B family. HslV subfamily. As to quaternary structure, a double ring-shaped homohexamer of HslV is capped on each side by a ring-shaped HslU homohexamer. The assembly of the HslU/HslV complex is dependent on binding of ATP.

Its subcellular location is the cytoplasm. It carries out the reaction ATP-dependent cleavage of peptide bonds with broad specificity.. Its activity is regulated as follows. Allosterically activated by HslU binding. Its function is as follows. Protease subunit of a proteasome-like degradation complex believed to be a general protein degrading machinery. This chain is ATP-dependent protease subunit HslV, found in Staphylococcus haemolyticus (strain JCSC1435).